The sequence spans 385 residues: 26S proteasome non-ATPase regulatory subunit 13 (385 aa).

The region spanning 176–347 (EFYKNALMYL…EIIHITWVTP (172 aa)) is the PCI domain.

Belongs to the proteasome subunit S11 family.

Functionally, acts as a regulatory subunit of the 26S proteasome which is involved in the ATP-dependent degradation of ubiquitinated proteins. The chain is 26S proteasome non-ATPase regulatory subunit 13 (psmD13) from Dictyostelium discoideum (Social amoeba).